Here is a 299-residue protein sequence, read N- to C-terminus: Zeta-sarcoglycan (299 aa).

Topologically, residues 1 to 37 (MTREQYILATQQNNLPRTENAQLYPVGIYGWRKRCLY) are cytoplasmic. A helical; Signal-anchor for type II membrane protein transmembrane segment spans residues 38–58 (FFVLLLLVTMIVNLAMTIWIL). The Extracellular portion of the chain corresponds to 59–299 (KVMNFTVDGM…QSSSNICLWS (241 aa)). 2 N-linked (GlcNAc...) asparagine glycosylation sites follow: Asn-62 and Asn-110. Cysteines 273 and 289 form a disulfide.

This sequence belongs to the sarcoglycan beta/delta/gamma/zeta family.

It is found in the cell membrane. Its subcellular location is the sarcolemma. It localises to the cytoplasm. The protein localises to the cytoskeleton. In terms of biological role, component of the sarcoglycan complex, a subcomplex of the dystrophin-glycoprotein complex which forms a link between the F-actin cytoskeleton and the extracellular matrix. May play a role in the maintenance of striated muscle membrane stability. In Homo sapiens (Human), this protein is Zeta-sarcoglycan (SGCZ).